The sequence spans 207 residues: Dephospho-CoA kinase (207 aa).

The DPCK domain occupies 5–203; it reads AVGLTGGIAC…ARYRALASVF (199 aa). Residue 13–18 coordinates ATP; sequence ACGKSL.

Belongs to the CoaE family.

The protein resides in the cytoplasm. The catalysed reaction is 3'-dephospho-CoA + ATP = ADP + CoA + H(+). The protein operates within cofactor biosynthesis; coenzyme A biosynthesis; CoA from (R)-pantothenate: step 5/5. Catalyzes the phosphorylation of the 3'-hydroxyl group of dephosphocoenzyme A to form coenzyme A. This chain is Dephospho-CoA kinase, found in Xylella fastidiosa (strain 9a5c).